We begin with the raw amino-acid sequence, 221 residues long: Thiopurine S-methyltransferase (221 aa).

Residues Trp12, Leu47, Glu68, and Arg125 each coordinate S-adenosyl-L-methionine.

It belongs to the class I-like SAM-binding methyltransferase superfamily. TPMT family.

It localises to the cytoplasm. It carries out the reaction S-adenosyl-L-methionine + a thiopurine = S-adenosyl-L-homocysteine + a thiopurine S-methylether.. The protein is Thiopurine S-methyltransferase of Legionella pneumophila (strain Corby).